Reading from the N-terminus, the 216-residue chain is MRQKHYLEAAAWKLQDSCPGQARYLLWAYSSSHDDKSTFEGTCPYCCQLLVQDKSRVRLKPKPKLTPKIQKLLNREARNYTLSFKEAKILKKYKDSKSVLLITCKTCNRTVKHHGKSRSFLSALKSNPTTPTSKLSLKTPERKTPSSANLNHTSGSKGKSPALIFRTPTSGQSTSICSSKNASKTKKHFSQLKMLLSQSESKKNPKMDFRNFLSSL.

Disordered regions lie at residues 118–185 and 197–216; these read RSFL…ASKT and SQSE…LSSL. Residues 124–136 are compositionally biased toward polar residues; that stretch reads LKSNPTTPTSKLS. Ser-126 carries the post-translational modification Phosphoserine. A phosphothreonine mark is found at Thr-130 and Thr-139. Polar residues-rich tracts occupy residues 145-157 and 167-182; these read PSSA…SGSK and TPTS…SKNA. Over residues 200-209 the composition is skewed to basic and acidic residues; the sequence is ESKKNPKMDF.

The protein belongs to the UPF0711 family.

The chain is UPF0711 protein C18orf21 homolog from Bos taurus (Bovine).